Consider the following 89-residue polypeptide: Small ribosomal subunit protein uS14A (89 aa).

This sequence belongs to the universal ribosomal protein uS14 family. In terms of assembly, part of the 30S ribosomal subunit. Contacts proteins S3 and S10.

Its function is as follows. Binds 16S rRNA, required for the assembly of 30S particles and may also be responsible for determining the conformation of the 16S rRNA at the A site. This is Small ribosomal subunit protein uS14A from Lactiplantibacillus plantarum (strain ATCC BAA-793 / NCIMB 8826 / WCFS1) (Lactobacillus plantarum).